The following is a 188-amino-acid chain: Elongation factor P (188 aa).

Lys34 carries the post-translational modification N6-(3,6-diaminohexanoyl)-5-hydroxylysine.

The protein belongs to the elongation factor P family. Post-translationally, may be beta-lysylated on the epsilon-amino group of Lys-34 by the combined action of EpmA and EpmB, and then hydroxylated on the C5 position of the same residue by EpmC (if this protein is present). Lysylation is critical for the stimulatory effect of EF-P on peptide-bond formation. The lysylation moiety may extend toward the peptidyltransferase center and stabilize the terminal 3-CCA end of the tRNA. Hydroxylation of the C5 position on Lys-34 may allow additional potential stabilizing hydrogen-bond interactions with the P-tRNA.

It localises to the cytoplasm. It functions in the pathway protein biosynthesis; polypeptide chain elongation. Involved in peptide bond synthesis. Alleviates ribosome stalling that occurs when 3 or more consecutive Pro residues or the sequence PPG is present in a protein, possibly by augmenting the peptidyl transferase activity of the ribosome. Modification of Lys-34 is required for alleviation. The sequence is that of Elongation factor P from Klebsiella pneumoniae (strain 342).